Here is a 371-residue protein sequence, read N- to C-terminus: Putative RING finger protein ORF117 (371 aa).

The RING-type zinc finger occupies 72-108 (CCICFRKDVIYKEVPCGHYICVECYKEPIRNVCPECN). Residues 178-192 (EEEMNESEAEEEEPV) show a composition bias toward acidic residues. Positions 178–218 (EEEMNESEAEEEEPVPEIAQFEALNTPPPPPTNRRPKIRRP) are disordered.

The polypeptide is Putative RING finger protein ORF117 (Magallana gigas (Pacific oyster)).